A 687-amino-acid chain; its full sequence is Pre-mRNA-splicing factor CLF1 (687 aa).

HAT repeat units lie at residues 45–77, 79–111, 113–145, 147–178, 180–211, 213–247, 251–283, 300–332, 337–369, 383–416, 451–483, 525–557, and 629–661; these read EYQR…FEIE, HDMR…AELK, KCIN…VEES, NNVE…FEIR, KNWN…FENR, GNTE…AKLV, AHWE…LKAG, TISY…LISE, QIMQ…LWMR, LEEE…FLIR, KEFD…LEEN, QEFE…YQTS, and LDQE…YIFP.

Belongs to the crooked-neck family. As to quaternary structure, belongs to the NTC complex (or PRP19-associated complex), composed of at least CEF1, CLF1, ISY1, NTC20, SNT309, SYF1, SYF2, and PRP19. The NTC complex associates with the spliceosome after the release of the U1 and U4 snRNAs and forms the CWC spliceosome subcomplex (or CEF1-associated complex) reminiscent of a late-stage spliceosome composed also of the U2, U5 and U6 snRNAs and at least BUD13, BUD31, BRR2, CDC40, CUS1, CWC2, CWC15, CWC21, CWC22, CWC23, CWC24, CWC25, CWC27, ECM2, HSH155, IST3, LEA1, MSL1, PRP8, PRP9, PRP11, PRP21, PRP22, PRP45, PRP46, SLU7, SMB1, SMD1, SMD2, SMD3, SMX2, SMX3, SNU114, SPP2, RSE1 and YJU2. Interacts with CEF1, ISY1, MUD2, NTC20, PRP22, PRP40, PRP46, SYF1, SYF2, and the ORC2 subunit of the origin recognition complex.

It localises to the nucleus. In terms of biological role, involved in pre-mRNA splicing and cell cycle progression. Required for the spliceosome assembly by promoting the functional integration of the U4/U6.U5 tri-snRNP particle into the U1-, U2-dependent pre-spliceosome. Also recruits PRP19 to the spliceosome, as a component of the NTC complex (or PRP19-associated complex). The association of the NTC complex to the spliceosome mediates conformational rearrangement or stabilizes the structure of the spliceosome after U4 snRNA dissociation, which leads to spliceosome maturation. Required for initiation of the DNA replication by binding the RNA replication origins, probably through its interaction with the origin recognition complex (ORC). This is Pre-mRNA-splicing factor CLF1 (CLF1) from Saccharomyces cerevisiae (strain ATCC 204508 / S288c) (Baker's yeast).